The primary structure comprises 578 residues: Zinc finger-containing ubiquitin peptidase 1 (578 aa).

Residues 2-24 (LSCDICGETVTSEPDMKAHLIVH) form a C2H2-type 1 zinc finger. Residues 29–52 (IVCPFCKLSGVSYDEMCFHIETAH) form a C2H2-type 2; atypical zinc finger. C2H2-type zinc fingers lie at residues 154 to 177 (PECPFCGKIEEHSEDMETHVKTTH) and 193 to 215 (YDCPMCGLICTNYHILQEHVDLH). Residues 226–248 (DRVQCSGDLQLAHQLQQEEDRKR) form an MIU region. The tract at residues 249–274 (RSEESRQEIEEFQKLQRQYGLDNSGG) is zUBD/ZHA. Lys262 carries the N6-acetyllysine modification. Cys360 acts as the Nucleophile in catalysis. His491 functions as the Proton acceptor in the catalytic mechanism. Asp512 is an active-site residue.

The protein belongs to the peptidase C78 family. ZUFSP subfamily. In terms of assembly, interacts with RPA1 and RPA2.

Its subcellular location is the cytoplasm. The protein resides in the nucleus. The enzyme catalyses Thiol-dependent hydrolysis of ester, thioester, amide, peptide and isopeptide bonds formed by the C-terminal Gly of ubiquitin (a 76-residue protein attached to proteins as an intracellular targeting signal).. Its function is as follows. Deubiquitinase with endodeubiquitinase activity that specifically interacts with and cleaves 'Lys-63'-linked long polyubiquitin chains. Shows only weak activity against 'Lys-11' and 'Lys-48'-linked chains. Plays an important role in genome stability pathways, functioning to prevent spontaneous DNA damage and also promote cellular survival in response to exogenous DNA damage. Modulates the ubiquitination status of replication protein A (RPA) complex proteins in response to replication stress. The polypeptide is Zinc finger-containing ubiquitin peptidase 1 (Macaca fascicularis (Crab-eating macaque)).